Consider the following 565-residue polypeptide: Liver carboxylesterase 1 (565 aa).

A signal peptide spans 1–18 (MWLCALALASLAACTAWG). Asparagine 79 carries N-linked (GlcNAc...) asparagine glycosylation. Residues cysteine 87 and cysteine 116 are joined by a disulfide bond. Catalysis depends on serine 221, which acts as the Acyl-ester intermediate. Cysteine 273 and cysteine 284 are disulfide-bonded. The active-site Charge relay system is the glutamate 353. N-linked (GlcNAc...) asparagine glycosylation occurs at asparagine 389. Residue histidine 467 is the Charge relay system of the active site. Residue leucine 565 is a short sequence motif, prevents secretion from ER.

It belongs to the type-B carboxylesterase/lipase family. In terms of assembly, monomer.

It localises to the endoplasmic reticulum lumen. The enzyme catalyses a carboxylic ester + H2O = an alcohol + a carboxylate + H(+). Functionally, involved in the detoxification of xenobiotics and in the activation of ester and amide prodrugs. This is Liver carboxylesterase 1 from Oryctolagus cuniculus (Rabbit).